We begin with the raw amino-acid sequence, 325 residues long: Tetraacyldisaccharide 4'-kinase (325 aa).

Position 53 to 60 (53 to 60 (SVGGNGKT)) interacts with ATP.

The protein belongs to the LpxK family.

It catalyses the reaction a lipid A disaccharide + ATP = a lipid IVA + ADP + H(+). It functions in the pathway glycolipid biosynthesis; lipid IV(A) biosynthesis; lipid IV(A) from (3R)-3-hydroxytetradecanoyl-[acyl-carrier-protein] and UDP-N-acetyl-alpha-D-glucosamine: step 6/6. Functionally, transfers the gamma-phosphate of ATP to the 4'-position of a tetraacyldisaccharide 1-phosphate intermediate (termed DS-1-P) to form tetraacyldisaccharide 1,4'-bis-phosphate (lipid IVA). This Pasteurella multocida (strain Pm70) protein is Tetraacyldisaccharide 4'-kinase.